The sequence spans 403 residues: Arginine biosynthesis bifunctional protein ArgJ (403 aa).

Substrate contacts are provided by Thr-149, Lys-175, Thr-186, Glu-272, Asn-398, and Thr-403. Thr-186 functions as the Nucleophile in the catalytic mechanism.

This sequence belongs to the ArgJ family. As to quaternary structure, heterotetramer of two alpha and two beta chains.

Its subcellular location is the cytoplasm. It catalyses the reaction N(2)-acetyl-L-ornithine + L-glutamate = N-acetyl-L-glutamate + L-ornithine. The catalysed reaction is L-glutamate + acetyl-CoA = N-acetyl-L-glutamate + CoA + H(+). Its pathway is amino-acid biosynthesis; L-arginine biosynthesis; L-ornithine and N-acetyl-L-glutamate from L-glutamate and N(2)-acetyl-L-ornithine (cyclic): step 1/1. The protein operates within amino-acid biosynthesis; L-arginine biosynthesis; N(2)-acetyl-L-ornithine from L-glutamate: step 1/4. In terms of biological role, catalyzes two activities which are involved in the cyclic version of arginine biosynthesis: the synthesis of N-acetylglutamate from glutamate and acetyl-CoA as the acetyl donor, and of ornithine by transacetylation between N(2)-acetylornithine and glutamate. The protein is Arginine biosynthesis bifunctional protein ArgJ of Caldanaerobacter subterraneus subsp. tengcongensis (strain DSM 15242 / JCM 11007 / NBRC 100824 / MB4) (Thermoanaerobacter tengcongensis).